A 259-amino-acid chain; its full sequence is Dihydroorotate dehydrogenase B (NAD(+)), electron transfer subunit (259 aa).

The 101-residue stretch at 2-102 (MQKQNMIVVN…LGPLGHGFPL (101 aa)) folds into the FAD-binding FR-type domain. FAD contacts are provided by residues 53–56 (RPIS), 70–72 (LYR), and 77–78 (GT). [2Fe-2S] cluster is bound by residues cysteine 221, cysteine 226, cysteine 229, and cysteine 246.

The protein belongs to the PyrK family. As to quaternary structure, heterotetramer of 2 PyrK and 2 PyrD type B subunits. It depends on [2Fe-2S] cluster as a cofactor. The cofactor is FAD.

Its pathway is pyrimidine metabolism; UMP biosynthesis via de novo pathway; orotate from (S)-dihydroorotate (NAD(+) route): step 1/1. Responsible for channeling the electrons from the oxidation of dihydroorotate from the FMN redox center in the PyrD type B subunit to the ultimate electron acceptor NAD(+). The chain is Dihydroorotate dehydrogenase B (NAD(+)), electron transfer subunit from Bacillus cereus (strain B4264).